The following is a 667-amino-acid chain: Probable potassium transport system protein Kup (667 aa).

A run of 12 helical transmembrane segments spans residues G16–M36, V58–L78, W101–P121, T146–G166, T167–I187, I221–L241, W253–A273, V294–G314, L343–F363, Y373–I393, P399–A419, and V431–I451.

The protein belongs to the HAK/KUP transporter (TC 2.A.72) family.

Its subcellular location is the cell membrane. The catalysed reaction is K(+)(in) + H(+)(in) = K(+)(out) + H(+)(out). Functionally, transport of potassium into the cell. Likely operates as a K(+):H(+) symporter. The polypeptide is Probable potassium transport system protein Kup (Streptococcus equi subsp. zooepidemicus (strain MGCS10565)).